Consider the following 257-residue polypeptide: Protein MoaE (257 aa).

6–29 (VITGGGTGIGAACARLMHPAGERV) contacts NAD(+). Residues 75-96 (LMSSSAAPAGWATAPPPRPATA) form a disordered region. Substrate is bound at residue serine 132. Tyrosine 145 serves as the catalytic Proton acceptor.

The protein belongs to the short-chain dehydrogenases/reductases (SDR) family.

Might catalyze the conversion of monoamine compounds or their metabolites. The sequence is that of Protein MoaE (moaE) from Klebsiella aerogenes (Enterobacter aerogenes).